The chain runs to 158 residues: Large ribosomal subunit protein uL16 (158 aa).

The protein belongs to the universal ribosomal protein uL16 family. Part of the 50S ribosomal subunit.

In terms of biological role, binds 23S rRNA and is also seen to make contacts with the A and possibly P site tRNAs. The sequence is that of Large ribosomal subunit protein uL16 from Prochlorococcus marinus (strain MIT 9313).